Reading from the N-terminus, the 645-residue chain is 1,4-alpha-glucan branching enzyme GlgB (645 aa).

Aspartate 309 functions as the Nucleophile in the catalytic mechanism. Glutamate 352 (proton donor) is an active-site residue. A disordered region spans residues 619-645; sequence VKTRKGSKKQDGSKTKVRSNVTSRGKR. Residues 636 to 645 show a composition bias toward polar residues; that stretch reads RSNVTSRGKR.

The protein belongs to the glycosyl hydrolase 13 family. GlgB subfamily. Monomer.

It catalyses the reaction Transfers a segment of a (1-&gt;4)-alpha-D-glucan chain to a primary hydroxy group in a similar glucan chain.. Its pathway is glycan biosynthesis; glycogen biosynthesis. Functionally, catalyzes the formation of the alpha-1,6-glucosidic linkages in glycogen by scission of a 1,4-alpha-linked oligosaccharide from growing alpha-1,4-glucan chains and the subsequent attachment of the oligosaccharide to the alpha-1,6 position. The chain is 1,4-alpha-glucan branching enzyme GlgB from Bacillus cereus (strain AH820).